The chain runs to 141 residues: Hemoglobin subunit alpha-A (141 aa).

One can recognise a Globin domain in the interval 1–141 (VLSSHDKSNV…VGTVLTAKYR (141 aa)). His58 is a binding site for O2. His87 is a binding site for heme b.

It belongs to the globin family. As to quaternary structure, heterotetramer of two alpha chains and two beta chains. In terms of tissue distribution, red blood cells.

Functionally, involved in oxygen transport from the lung to the various peripheral tissues. This chain is Hemoglobin subunit alpha-A (HBAA), found in Phoenicopterus ruber (American flamingo).